Reading from the N-terminus, the 285-residue chain is ATP synthase gamma chain (285 aa).

Belongs to the ATPase gamma chain family. F-type ATPases have 2 components, CF(1) - the catalytic core - and CF(0) - the membrane proton channel. CF(1) has five subunits: alpha(3), beta(3), gamma(1), delta(1), epsilon(1). CF(0) has three main subunits: a, b and c.

Its subcellular location is the cell membrane. Produces ATP from ADP in the presence of a proton gradient across the membrane. The gamma chain is believed to be important in regulating ATPase activity and the flow of protons through the CF(0) complex. The polypeptide is ATP synthase gamma chain (Exiguobacterium sp. (strain ATCC BAA-1283 / AT1b)).